The following is a 430-amino-acid chain: Tol-Pal system protein TolB (430 aa).

The N-terminal stretch at 1–21 (MKQALRVAFGFLILWASVLHA) is a signal peptide.

The protein belongs to the TolB family. As to quaternary structure, the Tol-Pal system is composed of five core proteins: the inner membrane proteins TolA, TolQ and TolR, the periplasmic protein TolB and the outer membrane protein Pal. They form a network linking the inner and outer membranes and the peptidoglycan layer.

It is found in the periplasm. Part of the Tol-Pal system, which plays a role in outer membrane invagination during cell division and is important for maintaining outer membrane integrity. TolB occupies a key intermediary position in the Tol-Pal system because it communicates directly with both membrane-embedded components, Pal in the outer membrane and TolA in the inner membrane. In Shigella flexneri, this protein is Tol-Pal system protein TolB.